Consider the following 398-residue polypeptide: Pentalenolactone synthase (398 aa).

Cys347 lines the heme pocket.

It belongs to the cytochrome P450 family. Heme serves as cofactor.

It catalyses the reaction pentalenolactone F + 2 reduced [2Fe-2S]-[ferredoxin] + O2 + 2 H(+) = pentalenolactone + 2 oxidized [2Fe-2S]-[ferredoxin] + 2 H2O. It functions in the pathway antibiotic biosynthesis; pentalenolactone biosynthesis. Its function is as follows. Catalyzes the final step in the biosynthesis of the sesquiterpenoid antibiotic pentalenolactone by mediating the oxidative rearrangement of pentalenolactone F to pentalenolactone. The sequence is that of Pentalenolactone synthase (penM) from Streptomyces exfoliatus (Streptomyces hydrogenans).